The sequence spans 150 residues: Large ribosomal subunit protein bL9 (150 aa).

The protein belongs to the bacterial ribosomal protein bL9 family.

Binds to the 23S rRNA. The sequence is that of Large ribosomal subunit protein bL9 from Burkholderia pseudomallei (strain 668).